The chain runs to 441 residues: MGADAIQTNGHDQAKLTGGEEIQRLRCFVKNYEWGKLGPESLVARLQEANTGQRVDSEIPYAEFWMGTHESGPSHVEFGSGHGVSDKCMVTLKSWVLDNPNLLGSKVVDKWGCDLPFLFKVLSVTKALSIQAHPNKALAEKLHREDPLLYRDNNHKPEIALAVTPFQALCGFVTLKELKEVITNVPEITELVGSKAADQIFNVHEHDEDERIKSVVRLIFTQLMSASNNETKQVVSRMKNRLLLETKHRELSEKEKLVLELEKQYTGDIGVISAFFFNYVKLNPGEALYLDANEPHAYISGDCVECMAASDNVVRAGLTPKHRDVQTLCSMLTYKLGYPEILKGFPLTPYVTRYLPPFDEFEVDHCDLPRGKSTVFPAVPGPSVYLVIEGKGQLRTGSSKVLVNRGDVLFVPADIEIHVTGESDVMKLYRAGVSSRFFQTL.

4 residues coordinate Zn(2+): glutamine 131, histidine 133, glutamate 158, and histidine 296. Residue arginine 315 is part of the active site.

The protein belongs to the mannose-6-phosphate isomerase type 1 family. Zn(2+) serves as cofactor. Not expressed in any organs under light (at protein level).

The enzyme catalyses D-mannose 6-phosphate = D-fructose 6-phosphate. Its pathway is nucleotide-sugar biosynthesis; GDP-alpha-D-mannose biosynthesis; alpha-D-mannose 1-phosphate from D-fructose 6-phosphate: step 1/2. Inhibited by EDTA, Zn(2+), Cd(2+), DTT, p-chloromercuribenzoate and L-ascorbic acid (AsA). In terms of biological role, involved in the synthesis of the GDP-mannose and dolichol-phosphate-mannose required for a number of critical mannosyl transfer reactions. This chain is Mannose-6-phosphate isomerase 2 (PMI2), found in Arabidopsis thaliana (Mouse-ear cress).